Here is a 116-residue protein sequence, read N- to C-terminus: Large ribosomal subunit protein uL18 (116 aa).

The protein belongs to the universal ribosomal protein uL18 family. In terms of assembly, part of the 50S ribosomal subunit; part of the 5S rRNA/L5/L18/L25 subcomplex. Contacts the 5S and 23S rRNAs.

This is one of the proteins that bind and probably mediate the attachment of the 5S RNA into the large ribosomal subunit, where it forms part of the central protuberance. The chain is Large ribosomal subunit protein uL18 from Shewanella halifaxensis (strain HAW-EB4).